The sequence spans 424 residues: MSDHADVSLPPQDRVRILSQLGSAVELNEDIPPRRYFRSGVEIIRMASIYSEEGNIEHAFILYNKYITLFIEKLPKHRDYKSAIIPEKKDAVKKLKNVAFPKAEELKTELLKRYTKEYEQYKERKKKEEEELARNIAIQQELEKEKQRVAQQKQKQLEQEQFHAFEKMIQKQELEKERLKIVQEFGKVDPGPCGPLLPDLEKPCVDVAPSSPFSPTQTSDCNTTLRPAKPPVVDRSLKPGALSVIENVPTIEGLRHIVVPRNLCSEFLQLASANTAKGIETCGVLCGKLMRNEFTITHVLIPRQNGGPDYCHTENEEEIFFMQDDLGLLTLGWIHTHPTQTAFLSSVDLHTHCSYQMMLPESIAIVCSPKFQETGFFKLTDYGLQEISTCRQKGFHPHGRDPPLFCDCSHVTVKDRIVTITDLR.

Residues 1–127 form an interaction with CHMP3 region; the sequence is MSDHADVSLP…YEQYKERKKK (127 aa). Ser2 and Ser48 each carry phosphoserine. The interaction with STAM stretch occupies residues 227–231; sequence PAKPP. Ser243 bears the Phosphoserine mark. Positions 257-388 constitute an MPN domain; that stretch reads IVVPRNLCSE…LTDYGLQEIS (132 aa). 7 residues coordinate Zn(2+): His335, His337, Asp348, His350, Cys390, His396, and His398. Positions 335–348 match the JAMM motif motif; that stretch reads HTHPTQTAFLSSVD.

This sequence belongs to the peptidase M67C family. Interacts with STAM. Interacts with SMAD6 and SMAD7. Interacts with CHMP3; the interaction appears to relieve the autoinhibition of CHMP3. Interacts with SMURF2 and RNF11; this interaction promotes ubiquitination. The cofactor is Zn(2+). In terms of processing, phosphorylated after BMP type I receptor activation. Post-translationally, ubiquitinated by SMURF2 in the presence of RNF11.

Its subcellular location is the nucleus. It localises to the membrane. The protein resides in the cytoplasm. It is found in the early endosome. Inhibited by N-ethylmaleimide. In terms of biological role, zinc metalloprotease that specifically cleaves 'Lys-63'-linked polyubiquitin chains. Does not cleave 'Lys-48'-linked polyubiquitin chains. Plays a role in signal transduction for cell growth and MYC induction mediated by IL-2 and GM-CSF. Potentiates BMP (bone morphogenetic protein) signaling by antagonizing the inhibitory action of SMAD6 and SMAD7. Has a key role in regulation of cell surface receptor-mediated endocytosis and ubiquitin-dependent sorting of receptors to lysosomes. Endosomal localization of STAMBP is required for efficient EGFR degradation but not for its internalization. Involved in the negative regulation of PI3K-AKT-mTOR and RAS-MAP signaling pathways. This chain is STAM-binding protein (Stambp), found in Rattus norvegicus (Rat).